Consider the following 1469-residue polypeptide: uncharacterized protein (1469 aa).

Positions 146–180 (GDHITPKEEEEKEKEKEKEKEKEKEKEKEKEKDSE) are enriched in basic and acidic residues. 9 disordered regions span residues 146 to 186 (GDHI…LQEQ), 231 to 255 (IQNN…DNNN), 306 to 344 (TTTT…GGDS), 430 to 455 (LNFN…PYHY), 520 to 560 (PVKN…NNNS), 654 to 706 (TTTT…PLVR), 719 to 755 (RTQT…VKNQ), 881 to 958 (YNNI…NIIN), and 1329 to 1369 (NCSS…NSSN). Composition is skewed to low complexity over residues 232 to 241 (QNNQNNQNNN), 306 to 327 (TTTT…ISNT), 430 to 449 (LNFN…NNNN), 523 to 559 (NNNN…INNN), and 654 to 693 (TTTT…TTTP). Polar residues predominate over residues 719-731 (RTQTQLQTKIQPK). The span at 732-749 (SPQPQPTAAPEPQKPPTP) shows a compositional bias: pro residues. Composition is skewed to low complexity over residues 1329–1347 (NCSS…SGSE) and 1354–1369 (RSNT…NSSN).

This is an uncharacterized protein from Dictyostelium discoideum (Social amoeba).